We begin with the raw amino-acid sequence, 154 residues long: UPF0178 protein RC1_2062 (154 aa).

Belongs to the UPF0178 family.

The polypeptide is UPF0178 protein RC1_2062 (Rhodospirillum centenum (strain ATCC 51521 / SW)).